Reading from the N-terminus, the 161-residue chain is Thy-1 membrane glycoprotein (161 aa).

An N-terminal signal peptide occupies residues 1–19 (MNLAISIALLLTVLQVSRG). Residue Q20 is modified to Pyrrolidone carboxylic acid. An Ig-like V-type domain is found at 20–126 (QKVTSLTACL…SQNVTVLRDK (107 aa)). 2 cysteine pairs are disulfide-bonded: C28-C130 and C38-C104. Residues N42 and N79 are each glycosylated (N-linked (GlcNAc...) asparagine). S82 carries the post-translational modification Phosphoserine. N119 carries N-linked (GlcNAc...) asparagine glycosylation. C130 carries GPI-anchor amidated cysteine; alternate lipidation. A propeptide spans 131 to 161 (EGISLLAQNTSWLXLLLLSLSLLQATDFMSL) (removed in mature form). The N-linked (GlcNAc...) asparagine glycan is linked to N139.

It is found in the cell membrane. May play a role in cell-cell or cell-ligand interactions during synaptogenesis and other events in the brain. The protein is Thy-1 membrane glycoprotein (THY1) of Macaca mulatta (Rhesus macaque).